A 219-amino-acid polypeptide reads, in one-letter code: Protein-L-isoaspartate O-methyltransferase 1 (219 aa).

The active site involves Ser-67.

The protein belongs to the methyltransferase superfamily. L-isoaspartyl/D-aspartyl protein methyltransferase family.

The protein resides in the cytoplasm. The enzyme catalyses [protein]-L-isoaspartate + S-adenosyl-L-methionine = [protein]-L-isoaspartate alpha-methyl ester + S-adenosyl-L-homocysteine. Catalyzes the methyl esterification of L-isoaspartyl residues in peptides and proteins that result from spontaneous decomposition of normal L-aspartyl and L-asparaginyl residues. It plays a role in the repair and/or degradation of damaged proteins. In Geotalea uraniireducens (strain Rf4) (Geobacter uraniireducens), this protein is Protein-L-isoaspartate O-methyltransferase 1.